Consider the following 154-residue polypeptide: Myoglobin (154 aa).

The 147-residue stretch at 2–148 (GLSDAEWQLV…FRNDIAAQYK (147 aa)) folds into the Globin domain. S4 carries the post-translational modification Phosphoserine. H65 is a binding site for nitrite. Residue H65 coordinates O2. Position 68 is a phosphothreonine (T68). H94 serves as a coordination point for heme b.

The protein belongs to the globin family. Monomeric.

The protein localises to the cytoplasm. The protein resides in the sarcoplasm. It carries out the reaction Fe(III)-heme b-[protein] + nitric oxide + H2O = Fe(II)-heme b-[protein] + nitrite + 2 H(+). It catalyses the reaction H2O2 + AH2 = A + 2 H2O. Monomeric heme protein which primary function is to store oxygen and facilitate its diffusion within muscle tissues. Reversibly binds oxygen through a pentacoordinated heme iron and enables its timely and efficient release as needed during periods of heightened demand. Depending on the oxidative conditions of tissues and cells, and in addition to its ability to bind oxygen, it also has a nitrite reductase activity whereby it regulates the production of bioactive nitric oxide. Under stress conditions, like hypoxia and anoxia, it also protects cells against reactive oxygen species thanks to its pseudoperoxidase activity. This chain is Myoglobin (MB), found in Oryctolagus cuniculus (Rabbit).